The chain runs to 701 residues: T-cell immunomodulatory protein homolog (701 aa).

Positions 1–29 are cleaved as a signal peptide; sequence MVKCGKYVLILELLLLTLLYNLIKRVSNS. The Extracellular portion of the chain corresponds to 30-657; it reads GETVSSFVDG…IQLSVNPSNK (628 aa). 7 N-linked (GlcNAc...) asparagine glycosylation sites follow: N148, N180, N217, N258, N458, N522, and N571. Residues 658–678 form a helical membrane-spanning segment; that stretch reads FYSIIYITLICLSVIGVLIFI. At 679–701 the chain is on the cytoplasmic side; the sequence is LDRKEKIEDSKEEMGFKSHFVIG.

This sequence belongs to the TIP family.

The protein localises to the membrane. Functionally, may protect the parasite against attack by the host immune system by immunomodulation. This is T-cell immunomodulatory protein homolog from Plasmodium yoelii yoelii.